The primary structure comprises 189 residues: Recombination protein RecR (189 aa).

The C4-type zinc finger occupies cysteine 48–cysteine 63. In terms of domain architecture, Toprim spans glutamine 71–proline 165.

This sequence belongs to the RecR family.

In terms of biological role, may play a role in DNA repair. It seems to be involved in an RecBC-independent recombinational process of DNA repair. It may act with RecF and RecO. This Prochlorococcus marinus (strain MIT 9303) protein is Recombination protein RecR.